A 314-amino-acid chain; its full sequence is 4-hydroxy-3-methylbut-2-enyl diphosphate reductase (314 aa).

Position 18 (Cys18) interacts with [4Fe-4S] cluster. His47 and His80 together coordinate (2E)-4-hydroxy-3-methylbut-2-enyl diphosphate. Positions 47 and 80 each coordinate dimethylallyl diphosphate. 2 residues coordinate isopentenyl diphosphate: His47 and His80. Cys102 is a binding site for [4Fe-4S] cluster. Residue His130 participates in (2E)-4-hydroxy-3-methylbut-2-enyl diphosphate binding. Residue His130 coordinates dimethylallyl diphosphate. His130 serves as a coordination point for isopentenyl diphosphate. Residue Glu132 is the Proton donor of the active site. Thr171 lines the (2E)-4-hydroxy-3-methylbut-2-enyl diphosphate pocket. Position 201 (Cys201) interacts with [4Fe-4S] cluster. 4 residues coordinate (2E)-4-hydroxy-3-methylbut-2-enyl diphosphate: Ser229, Ser230, Asn231, and Ser273. 4 residues coordinate dimethylallyl diphosphate: Ser229, Ser230, Asn231, and Ser273. Residues Ser229, Ser230, Asn231, and Ser273 each contribute to the isopentenyl diphosphate site.

This sequence belongs to the IspH family. The cofactor is [4Fe-4S] cluster.

It carries out the reaction isopentenyl diphosphate + 2 oxidized [2Fe-2S]-[ferredoxin] + H2O = (2E)-4-hydroxy-3-methylbut-2-enyl diphosphate + 2 reduced [2Fe-2S]-[ferredoxin] + 2 H(+). The catalysed reaction is dimethylallyl diphosphate + 2 oxidized [2Fe-2S]-[ferredoxin] + H2O = (2E)-4-hydroxy-3-methylbut-2-enyl diphosphate + 2 reduced [2Fe-2S]-[ferredoxin] + 2 H(+). It functions in the pathway isoprenoid biosynthesis; dimethylallyl diphosphate biosynthesis; dimethylallyl diphosphate from (2E)-4-hydroxy-3-methylbutenyl diphosphate: step 1/1. It participates in isoprenoid biosynthesis; isopentenyl diphosphate biosynthesis via DXP pathway; isopentenyl diphosphate from 1-deoxy-D-xylulose 5-phosphate: step 6/6. Functionally, catalyzes the conversion of 1-hydroxy-2-methyl-2-(E)-butenyl 4-diphosphate (HMBPP) into a mixture of isopentenyl diphosphate (IPP) and dimethylallyl diphosphate (DMAPP). Acts in the terminal step of the DOXP/MEP pathway for isoprenoid precursor biosynthesis. The sequence is that of 4-hydroxy-3-methylbut-2-enyl diphosphate reductase from Phenylobacterium zucineum (strain HLK1).